A 118-amino-acid polypeptide reads, in one-letter code: Large ribosomal subunit protein bL20c (118 aa).

This sequence belongs to the bacterial ribosomal protein bL20 family.

The protein resides in the plastid. It localises to the chloroplast. Its function is as follows. Binds directly to 23S ribosomal RNA and is necessary for the in vitro assembly process of the 50S ribosomal subunit. It is not involved in the protein synthesizing functions of that subunit. The sequence is that of Large ribosomal subunit protein bL20c from Gracilaria tenuistipitata var. liui (Red alga).